A 389-amino-acid polypeptide reads, in one-letter code: Lipid-A-disaccharide synthase (389 aa).

The protein belongs to the LpxB family.

The catalysed reaction is a lipid X + a UDP-2-N,3-O-bis[(3R)-3-hydroxyacyl]-alpha-D-glucosamine = a lipid A disaccharide + UDP + H(+). The protein operates within bacterial outer membrane biogenesis; LPS lipid A biosynthesis. Its function is as follows. Condensation of UDP-2,3-diacylglucosamine and 2,3-diacylglucosamine-1-phosphate to form lipid A disaccharide, a precursor of lipid A, a phosphorylated glycolipid that anchors the lipopolysaccharide to the outer membrane of the cell. The polypeptide is Lipid-A-disaccharide synthase (Burkholderia ambifaria (strain ATCC BAA-244 / DSM 16087 / CCUG 44356 / LMG 19182 / AMMD) (Burkholderia cepacia (strain AMMD))).